Consider the following 299-residue polypeptide: Nucleotide-binding protein SCO1952 (299 aa).

Position 23-30 (23-30 (GMSGAGRS)) interacts with ATP. 74–77 (DVRG) contacts GTP.

The protein belongs to the RapZ-like family.

Its function is as follows. Displays ATPase and GTPase activities. The chain is Nucleotide-binding protein SCO1952 from Streptomyces coelicolor (strain ATCC BAA-471 / A3(2) / M145).